The chain runs to 112 residues: MSSERDLVNFLGDFSMDVAKAVIAGGVATAIGSLASFACVSFGFPVILVGGAILLTGIVCTVVLNEIDAQCHLSEKLKYAIRDGLKRQQELDKWKRENMTPFMYVLNTPPVI.

At 1-21 the chain is on the cytoplasmic side; it reads MSSERDLVNFLGDFSMDVAKA. The chain crosses the membrane as a helical span at residues 22–42; it reads VIAGGVATAIGSLASFACVSF. Residue G43 is a topological domain, periplasmic. The chain crosses the membrane as a helical span at residues 44–64; the sequence is FPVILVGGAILLTGIVCTVVL. The Cytoplasmic portion of the chain corresponds to 65–112; that stretch reads NEIDAQCHLSEKLKYAIRDGLKRQQELDKWKRENMTPFMYVLNTPPVI.

The protein localises to the cell inner membrane. This is Putative inner membrane protein YafU (yafU) from Escherichia coli (strain K12).